The following is a 179-amino-acid chain: Large ribosomal subunit protein uL6 (179 aa).

The protein belongs to the universal ribosomal protein uL6 family. As to quaternary structure, part of the 50S ribosomal subunit.

Functionally, this protein binds to the 23S rRNA, and is important in its secondary structure. It is located near the subunit interface in the base of the L7/L12 stalk, and near the tRNA binding site of the peptidyltransferase center. The sequence is that of Large ribosomal subunit protein uL6 from Pelodictyon phaeoclathratiforme (strain DSM 5477 / BU-1).